The primary structure comprises 316 residues: M-phase inducer phosphatase cdc-25.3 (316 aa).

Residues 35–65 form a disordered region; sequence QNRQHSSAISHISNSSPPTRKRSIDGGYTSG. The segment covering 39-50 has biased composition (low complexity); it reads HSSAISHISNSS. In terms of domain architecture, Rhodanese spans 136–242; that stretch reads FMQKYILIDC…FYAFTRGLEK (107 aa).

This sequence belongs to the MPI phosphatase family.

It carries out the reaction O-phospho-L-tyrosyl-[protein] + H2O = L-tyrosyl-[protein] + phosphate. In Caenorhabditis elegans, this protein is M-phase inducer phosphatase cdc-25.3 (cdc-25.3).